The primary structure comprises 274 residues: Carbonic anhydrase (274 aa).

The Zn(2+) site is built by cysteine 39, histidine 98, and cysteine 101. Residues 214 to 274 are disordered; sequence EDEYAPHPNS…QAERIYRGSR (61 aa). Composition is skewed to basic and acidic residues over residues 234 to 245 and 261 to 274; these read PGKERPGREKAT and LPRE…RGSR.

This sequence belongs to the beta-class carbonic anhydrase family. A hexamer formed by a trimer of dimers. Interacts with the first 260 residues of CcmM; both the N-terminal 206 residues and the C-terminal tail contribute to CcmM binding. Interacts with full-length and the N-terminal 249 residues of CcmM. A probable CcmM-CcaA-CcmN complex as well as a CcaA-RuBisCO-CcmM complex can also be isolated. Zn(2+) is required as a cofactor.

The protein resides in the carboxysome. The catalysed reaction is hydrogencarbonate + H(+) = CO2 + H2O. Its activity is regulated as follows. Inhibited by ethoxyzolamide. Its function is as follows. Reversible hydration of carbon dioxide. Essential to photosynthetic carbon dioxide fixation, supplies CO(2) to RuBisCO (ribulose bisphosphate carboxylase, rbcL-rbcS) in the carboxysome. This Synechocystis sp. (strain ATCC 27184 / PCC 6803 / Kazusa) protein is Carbonic anhydrase.